Consider the following 498-residue polypeptide: U4/U6 small nuclear ribonucleoprotein Prp31 (498 aa).

Residues 1 to 24 (MSLADELLADLEEAAEEEEENLID) form a disordered region. A compositionally biased stretch (acidic residues) spans 7-24 (LLADLEEAAEEEEENLID). 2 coiled-coil regions span residues 84–119 (EAAP…KYSK) and 180–214 (DEEL…MSFI). The region spanning 214-332 (IAPNLSIIVG…IERKFDKWQE (119 aa)) is the Nop domain. Residues 333 to 356 (PPPVKQVKPLPAPLDGQRKKRGGR) form a disordered region. Residues 350–363 (RKKRGGRRYRKMKE) carry the Nuclear localization signal (NLS) motif.

This sequence belongs to the PRP31 family. Identified in the spliceosome B complex. Component of the U4/U6-U5 tri-snRNP complex. Component of some MLL1/MLL complex.

It localises to the nucleus. It is found in the nucleus speckle. The protein resides in the cajal body. Functionally, involved in pre-mRNA splicing as component of the spliceosome. Required for the assembly of the U4/U5/U6 tri-snRNP complex, one of the building blocks of the spliceosome. The chain is U4/U6 small nuclear ribonucleoprotein Prp31 (prpf31) from Xenopus laevis (African clawed frog).